A 78-amino-acid polypeptide reads, in one-letter code: Putative membrane protein insertion efficiency factor (78 aa).

It belongs to the UPF0161 family.

It localises to the cell membrane. Could be involved in insertion of integral membrane proteins into the membrane. The polypeptide is Putative membrane protein insertion efficiency factor (Bacillus cereus (strain G9842)).